We begin with the raw amino-acid sequence, 579 residues long: Probable cholinesterase (579 aa).

An N-terminal signal peptide occupies residues 1 to 19; that stretch reads MTDHKIIMLLLLGIYCIQA. N-linked (GlcNAc...) asparagine; by host glycosylation is found at Asn77 and Asn144. Ser217 serves as the catalytic Acyl-ester intermediate. Asn257, Asn269, and Asn283 each carry an N-linked (GlcNAc...) asparagine; by host glycan. Glu337 serves as the catalytic Charge relay system. Asn373 and Asn394 each carry an N-linked (GlcNAc...) asparagine; by host glycan. The active-site Charge relay system is the His451. Residue Asn469 is glycosylated (N-linked (GlcNAc...) asparagine; by host).

The protein belongs to the type-B carboxylesterase/lipase family.

The catalysed reaction is an acylcholine + H2O = a carboxylate + choline + H(+). May be involved in the disruption of the host membrane. The protein is Probable cholinesterase of Acanthamoeba polyphaga mimivirus (APMV).